We begin with the raw amino-acid sequence, 289 residues long: Probable prolyl 4-hydroxylase 10 (289 aa).

The helical; Signal-anchor for type II membrane protein transmembrane segment at 20–40 (LVFAVLIMSTFVILILLAFGI) threads the bilayer. The Lumenal segment spans residues 41–289 (LSVPSNNAGS…KWLRVHEYKV (249 aa)). The region spanning 161–284 (HGEGLQVLHY…KWSSTKWLRV (124 aa)) is the Fe2OG dioxygenase domain. Fe cation contacts are provided by His-179 and Asp-181. N-linked (GlcNAc...) asparagine glycosylation occurs at Asn-220. His-265 is a Fe cation binding site. Residue Lys-275 participates in 2-oxoglutarate binding.

It belongs to the P4HA family. Fe(2+) is required as a cofactor. L-ascorbate serves as cofactor.

The protein localises to the endoplasmic reticulum membrane. It catalyses the reaction L-prolyl-[collagen] + 2-oxoglutarate + O2 = trans-4-hydroxy-L-prolyl-[collagen] + succinate + CO2. Functionally, catalyzes the post-translational formation of 4-hydroxyproline in -Xaa-Pro-Gly- sequences in proline-rich peptide sequences of plant glycoproteins and other proteins. Hydroxyprolines are important constituent of many plant cell wall glycoproteins such as extensins, hydroxyproline-rich glycoproteins, lectins and arabinogalactan proteins. This chain is Probable prolyl 4-hydroxylase 10, found in Arabidopsis thaliana (Mouse-ear cress).